The sequence spans 259 residues: uncharacterized protein (259 aa).

6 helical membrane passes run 9–31 (ILSVLTLFIFFQYVAKFGILESL), 84–106 (LLGGEILDGLAFGFFFLVYLQWF), 126–148 (FLIYRFAITLFGSTICFYRFVFG), 153–175 (SIVAGILTFALFLSQRALNLEYV), 196–215 (HFILSAPAMGVGATAGYIAA), and 230–252 (TFRAFLLLTIVVVCILTLGSWLG).

The protein localises to the cell membrane. This is an uncharacterized protein from Archaeoglobus fulgidus (strain ATCC 49558 / DSM 4304 / JCM 9628 / NBRC 100126 / VC-16).